The following is a 118-amino-acid chain: Vitelline membrane protein Vm32E (118 aa).

The N-terminal stretch at 1 to 17 is a signal peptide; sequence MKIVALTLVAFVALAGA. One can recognise a VM domain in the interval 36-75; the sequence is GYPAPPCPTNYLFSCQPNLAPAPCAQEAQAPAYGSAGAYT.

The protein belongs to the vitelline membrane family.

It is found in the secreted. In terms of biological role, major early eggshell protein. The protein is Vitelline membrane protein Vm32E of Drosophila simulans (Fruit fly).